The primary structure comprises 265 residues: MFHNCRMEGSCNAETTSHVTAVVRAPIFCNCFALCLEIPILWDDLLYRHEKLLFGGFTCNGGAELILNSHCCLADAQMWQVHCHCSDSLSLQCLSATQVLKEFLEEFVMGGFVNKKYLWYREFVNSSRPDEINYVGSIMFRNIHYIYFRLSFFSTVHQACMLAIQRCISPELGVVFKSTYNYWLVLKCKSCSLQNYCALKSCAFWVRSIIDRVLREVEKIPVVLHRTTSKAEERRQTALKQAMMYGRCRHIQNLCLVNLNAFLHF.

It belongs to the adenoviridae E4 30 to 34 kDa protein family. In terms of assembly, interacts with E1B-55k.

The protein resides in the host nucleus. It localises to the host cytoplasm. In terms of biological role, plays a major role to prevent cellular inhibition of viral genome replication by nuclear bodies. Assembles an SCF-like E3 ubiquitin ligase complex based on the cellular proteins ELOB, ELOC, CUL5 and RBX1, in cooperation with viral E1B-55K. This viral RING-type ligase ubiquitinates cellular substrates prior to proteasomal degradation: p53/TP53, LIG4, MRE11-RAD50-NBS1 (MRN) complex, ITGA3, DAXX and BLM. This Canine adenovirus serotype 1 (strain RI261) (CAdV-1) protein is Early E4 31 kDa protein.